A 193-amino-acid chain; its full sequence is dCTP deaminase (193 aa).

DCTP-binding positions include 110-115 (RSSLAR), D128, 136-138 (VLE), Y171, K178, and Q182. The active-site Proton donor/acceptor is the E138. The disordered stretch occupies residues 169 to 193 (RPYNRREDAKYRNQQGAVASRIDKD).

Belongs to the dCTP deaminase family. Homotrimer.

The enzyme catalyses dCTP + H2O + H(+) = dUTP + NH4(+). Its pathway is pyrimidine metabolism; dUMP biosynthesis; dUMP from dCTP (dUTP route): step 1/2. Catalyzes the deamination of dCTP to dUTP. The polypeptide is dCTP deaminase (Escherichia coli O1:K1 / APEC).